We begin with the raw amino-acid sequence, 188 residues long: Protein GrpE (188 aa).

Residues 1–22 are disordered; the sequence is MADEQTLDTQNLDANQAPEASG.

The protein belongs to the GrpE family. In terms of assembly, homodimer.

The protein localises to the cytoplasm. Functionally, participates actively in the response to hyperosmotic and heat shock by preventing the aggregation of stress-denatured proteins, in association with DnaK and GrpE. It is the nucleotide exchange factor for DnaK and may function as a thermosensor. Unfolded proteins bind initially to DnaJ; upon interaction with the DnaJ-bound protein, DnaK hydrolyzes its bound ATP, resulting in the formation of a stable complex. GrpE releases ADP from DnaK; ATP binding to DnaK triggers the release of the substrate protein, thus completing the reaction cycle. Several rounds of ATP-dependent interactions between DnaJ, DnaK and GrpE are required for fully efficient folding. The sequence is that of Protein GrpE from Pseudomonas fluorescens (strain ATCC BAA-477 / NRRL B-23932 / Pf-5).